A 437-amino-acid polypeptide reads, in one-letter code: Trigger factor (437 aa).

The 86-residue stretch at Asp-161–Pro-246 folds into the PPIase FKBP-type domain.

It belongs to the FKBP-type PPIase family. Tig subfamily.

Its subcellular location is the cytoplasm. The enzyme catalyses [protein]-peptidylproline (omega=180) = [protein]-peptidylproline (omega=0). In terms of biological role, involved in protein export. Acts as a chaperone by maintaining the newly synthesized protein in an open conformation. Functions as a peptidyl-prolyl cis-trans isomerase. The polypeptide is Trigger factor (Pseudomonas putida (strain ATCC 47054 / DSM 6125 / CFBP 8728 / NCIMB 11950 / KT2440)).